The chain runs to 330 residues: MTHSVTLRGPSPWGFRLVGGRDFSAPLTISRVHAGSKAALAALCPGDLIQAINGESTELMTHLEAQNRIKGCHDHLTLSVSRPENKNWPSAPDDKAQAHRIHIDPESQDCSPATSRRSSVSGISLEDNRSGLGSPYGQPPRLPVPHNGSSNEATLPAQMSALHVSPPTSADTARVLPRNRDCRVDLGSEVYRMLREPAEPTASEPKQSGSFRYLQGMLEAGEGGDRPGSGGPRNLKPAASKLGAPLSGLQGLPECTRCGHGIVGTIVKARDKLYHPECFMCSDCGLNLKQRGYFFLDERLYCENHAKARVKPPEGYDVVAVYPNAKVELV.

Positions 1–84 (MTHSVTLRGP…HLTLSVSRPE (84 aa)) constitute a PDZ domain. 2 disordered regions span residues 104-153 (DPES…SNEA) and 219-242 (EAGE…ASKL). Phosphoserine occurs at positions 107, 111, 115, 118, 119, 124, and 134. Over residues 108 to 122 (QDCSPATSRRSSVSG) the composition is skewed to polar residues. The LIM zinc-binding domain maps to 255–305 (CTRCGHGIVGTIVKARDKLYHPECFMCSDCGLNLKQRGYFFLDERLYCENH).

As to quaternary structure, homodimer. Interacts (via C-terminus only or via combined C-terminus and LIM domain, but not LIM domain only) with PTPN13 (via the second or fourth PDZ domains). Found in a complex with PTPN13 and TRIP6. Interacts (via PDZ domain) with ACTN1 and ACTN2 (via C-terminal SDL residues). Interacts (via PDZ domain) with TRIP6 (via the second LIM domain or via the third LIM domain plus C-terminus). Interacts (via LIM domain) with GRIA1 (via C-terminus); this interaction as well as the interaction with alpha-actinin is required for their colocalization in early endosomes. Interacts with PDLIM1. Forms (via LIM domain) a heterodimer with PDLIM3. Interacts directly with SRC (via kinase domain and to a lesser extent the SH2 domain). Post-translationally, phosphorylated on tyrosine residue(s). Can be dephosphorylated by PTPN13. In terms of tissue distribution, expressed in several non-muscle tissues including lung, brain, ovary and uterus, and especially in epithelial cells at 14 dpc. In the uterus, high expression in the glandular epithelium, but absent in the simple columnar epithelium lining the uterus cavity.

The protein localises to the cytoplasm. Its subcellular location is the cytoskeleton. The protein resides in the cell projection. It is found in the dendritic spine. It localises to the early endosome membrane. The protein localises to the recycling endosome membrane. Its subcellular location is the nucleus. The protein resides in the perinuclear region. It is found in the lamellipodium. It localises to the synapse. The protein localises to the synaptosome. Suppresses SRC activation by recognizing and binding to active SRC and facilitating PTPN13-mediated dephosphorylation of SRC 'Tyr-419' leading to its inactivation. Inactivated SRC dissociates from this protein allowing the initiation of a new SRC inactivation cycle. Involved in reorganization of the actin cytoskeleton. In nonmuscle cells, binds to ACTN1 (alpha-actinin-1), increases the affinity of ACTN1 to F-actin (filamentous actin), and promotes formation of actin stress fibers. Involved in regulation of the synaptic AMPA receptor transport in dendritic spines of hippocampal pyramidal neurons directing the receptors toward an insertion at the postsynaptic membrane. Links endosomal surface-internalized GRIA1-containing AMPA receptors to the alpha-actinin/actin cytoskeleton. Increases AMPA receptor-mediated excitatory postsynaptic currents in neurons. The chain is PDZ and LIM domain protein 4 (Pdlim4) from Mus musculus (Mouse).